The chain runs to 149 residues: UPF0178 protein VC0395_A0405/VC395_0897 (149 aa).

It belongs to the UPF0178 family.

This Vibrio cholerae serotype O1 (strain ATCC 39541 / Classical Ogawa 395 / O395) protein is UPF0178 protein VC0395_A0405/VC395_0897.